The chain runs to 146 residues: NADH-quinone oxidoreductase subunit A (146 aa).

3 helical membrane-spanning segments follow: residues 8-28 (FGSVFVFLLLGVIFVVGGYLT), 63-83 (FYVVALIFIIFDVEVVFLYPW), and 93-113 (FALIEVLVFAGILILGLAYAW).

Belongs to the complex I subunit 3 family. In terms of assembly, NDH-1 is composed of 14 different subunits. Subunits NuoA, H, J, K, L, M, N constitute the membrane sector of the complex.

The protein resides in the cell inner membrane. The enzyme catalyses a quinone + NADH + 5 H(+)(in) = a quinol + NAD(+) + 4 H(+)(out). NDH-1 shuttles electrons from NADH, via FMN and iron-sulfur (Fe-S) centers, to quinones in the respiratory chain. The immediate electron acceptor for the enzyme in this species is believed to be a menaquinone. Couples the redox reaction to proton translocation (for every two electrons transferred, four hydrogen ions are translocated across the cytoplasmic membrane), and thus conserves the redox energy in a proton gradient. This is NADH-quinone oxidoreductase subunit A from Chlorobium chlorochromatii (strain CaD3).